The chain runs to 552 residues: 5'-AMP-activated protein kinase catalytic subunit alpha-2 (552 aa).

The Protein kinase domain occupies 16 to 268 (YVLGDTLGVG…IKDIREHEWF (253 aa)). ATP-binding positions include 22–30 (LGVGTFGKV) and K45. D139 acts as the Proton acceptor in catalysis. T172 carries the phosphothreonine; by LKB1 and CaMKK2 modification. T258 is subject to Phosphothreonine. Residues 291-376 (EAVKEVCEKF…PERMPPLIAD (86 aa)) are AIS. A Phosphoserine modification is found at S377. Residues 477 to 521 (VEQRSGSSTPQRSCSAAGLHRPRSSFDSTTAESHSLSGSLTGSLT) are disordered. The segment covering 480-490 (RSGSSTPQRSC) has biased composition (polar residues). A Phosphoserine modification is found at S491. Residues 501–510 (SFDSTTAESH) show a composition bias toward polar residues. Residues 511-521 (SLSGSLTGSLT) show a composition bias toward low complexity.

The protein belongs to the protein kinase superfamily. CAMK Ser/Thr protein kinase family. SNF1 subfamily. In terms of assembly, AMPK is a heterotrimer of an alpha catalytic subunit (PRKAA1 or PRKAA2), a beta (PRKAB1 or PRKAB2) and a gamma non-catalytic subunits (PRKAG1, PRKAG2 or PRKAG3). Interacts with FNIP1 and FNIP2. Interacts with DUSP29. Interacts with ARF6. The phosphorylated form at Thr-172 mediated by CamKK2 interacts with ACSS2. It depends on Mg(2+) as a cofactor. In terms of processing, ubiquitinated. Phosphorylated at Thr-172 by STK11/LKB1 in complex with STE20-related adapter-alpha (STRADA) pseudo kinase and CAB39. Also phosphorylated at Thr-172 by CAMKK2; triggered by a rise in intracellular calcium ions, without detectable changes in the AMP/ATP ratio. CAMKK1 can also phosphorylate Thr-172, but at much lower level. Dephosphorylated by protein phosphatase 2A and 2C (PP2A and PP2C). Phosphorylated by ULK1; leading to negatively regulate AMPK activity and suggesting the existence of a regulatory feedback loop between ULK1 and AMPK. Dephosphorylated by PPM1A and PPM1B at Thr-172 (mediated by STK11/LKB1).

The protein resides in the cytoplasm. It is found in the nucleus. It carries out the reaction L-seryl-[protein] + ATP = O-phospho-L-seryl-[protein] + ADP + H(+). The enzyme catalyses L-threonyl-[protein] + ATP = O-phospho-L-threonyl-[protein] + ADP + H(+). The catalysed reaction is L-seryl-[acetyl-CoA carboxylase] + ATP = O-phospho-L-seryl-[acetyl-CoA carboxylase] + ADP + H(+). It catalyses the reaction L-seryl-[3-hydroxy-3-methylglutaryl-coenzyme A reductase] + ATP = O-phospho-L-seryl-[3-hydroxy-3-methylglutaryl-coenzyme A reductase] + ADP + H(+). Activated by phosphorylation on Thr-172. Binding of AMP to non-catalytic gamma subunit (PRKAG1, PRKAG2 or PRKAG3) results in allosteric activation, inducing phosphorylation on Thr-172. AMP-binding to gamma subunit also sustains activity by preventing dephosphorylation of Thr-172. ADP also stimulates Thr-172 phosphorylation, without stimulating already phosphorylated AMPK. ATP promotes dephosphorylation of Thr-172, rendering the enzyme inactive. Under physiological conditions AMPK mainly exists in its inactive form in complex with ATP, which is much more abundant than AMP. Selectively inhibited by compound C (6-[4-(2-Piperidin-1-yl-ethoxy)-phenyl)]-3-pyridin-4-yl-pyyrazolo[1,5-a] pyrimidine. Activated by resveratrol, a natural polyphenol present in red wine, and S17834, a synthetic polyphenol. Salicylate/aspirin directly activates kinase activity, primarily by inhibiting Thr-172 dephosphorylation. Its function is as follows. Catalytic subunit of AMP-activated protein kinase (AMPK), an energy sensor protein kinase that plays a key role in regulating cellular energy metabolism. In response to reduction of intracellular ATP levels, AMPK activates energy-producing pathways and inhibits energy-consuming processes: inhibits protein, carbohydrate and lipid biosynthesis, as well as cell growth and proliferation. AMPK acts via direct phosphorylation of metabolic enzymes, and by longer-term effects via phosphorylation of transcription regulators. Regulates lipid synthesis by phosphorylating and inactivating lipid metabolic enzymes such as ACACA, ACACB, GYS1, HMGCR and LIPE; regulates fatty acid and cholesterol synthesis by phosphorylating acetyl-CoA carboxylase (ACACA and ACACB) and hormone-sensitive lipase (LIPE) enzymes, respectively. Promotes lipolysis of lipid droplets by mediating phosphorylation of isoform 1 of CHKA (CHKalpha2). Regulates insulin-signaling and glycolysis by phosphorylating IRS1, PFKFB2 and PFKFB3. Involved in insulin receptor/INSR internalization. AMPK stimulates glucose uptake in muscle by increasing the translocation of the glucose transporter SLC2A4/GLUT4 to the plasma membrane, possibly by mediating phosphorylation of TBC1D4/AS160. Regulates transcription and chromatin structure by phosphorylating transcription regulators involved in energy metabolism such as CRTC2/TORC2, FOXO3, histone H2B, HDAC5, MEF2C, MLXIPL/ChREBP, EP300, HNF4A, p53/TP53, SREBF1, SREBF2 and PPARGC1A. Acts as a key regulator of glucose homeostasis in liver by phosphorylating CRTC2/TORC2, leading to CRTC2/TORC2 sequestration in the cytoplasm. In response to stress, phosphorylates 'Ser-36' of histone H2B (H2BS36ph), leading to promote transcription. Acts as a key regulator of cell growth and proliferation by phosphorylating FNIP1, TSC2, RPTOR, WDR24 and ATG1/ULK1: in response to nutrient limitation, negatively regulates the mTORC1 complex by phosphorylating RPTOR component of the mTORC1 complex and by phosphorylating and activating TSC2. Also phosphorylates and inhibits GATOR2 subunit WDR24 in response to nutrient limitation, leading to suppress glucose-mediated mTORC1 activation. In response to energetic stress, phosphorylates FNIP1, inactivating the non-canonical mTORC1 signaling, thereby promoting nuclear translocation of TFEB and TFE3, and inducing transcription of lysosomal or autophagy genes. In response to nutrient limitation, promotes autophagy by phosphorylating and activating ATG1/ULK1. In that process also activates WDR45/WIPI4. Phosphorylates CASP6, thereby preventing its autoprocessing and subsequent activation. AMPK also acts as a regulator of circadian rhythm by mediating phosphorylation of CRY1, leading to destabilize it. May regulate the Wnt signaling pathway by phosphorylating CTNNB1, leading to stabilize it. Also acts as a regulator of cellular polarity by remodeling the actin cytoskeleton; probably by indirectly activating myosin. Also phosphorylates CFTR, EEF2K, KLC1, NOS3 and SLC12A1. Plays an important role in the differential regulation of pro-autophagy (composed of PIK3C3, BECN1, PIK3R4 and UVRAG or ATG14) and non-autophagy (composed of PIK3C3, BECN1 and PIK3R4) complexes, in response to glucose starvation. Can inhibit the non-autophagy complex by phosphorylating PIK3C3 and can activate the pro-autophagy complex by phosphorylating BECN1. Upon glucose starvation, promotes ARF6 activation in a kinase-independent manner leading to cell migration. Upon glucose deprivation mediates the phosphorylation of ACSS2 at 'Ser-659', which exposes the nuclear localization signal of ACSS2, required for its interaction with KPNA1 and nuclear translocation. Upon stress, regulates mitochondrial fragmentation through phosphorylation of MTFR1L. This is 5'-AMP-activated protein kinase catalytic subunit alpha-2 (PRKAA2) from Pongo abelii (Sumatran orangutan).